A 355-amino-acid polypeptide reads, in one-letter code: Protein RecA (355 aa).

An ATP-binding site is contributed by 72–79 (GPESSGKT).

Belongs to the RecA family.

The protein localises to the cytoplasm. Functionally, can catalyze the hydrolysis of ATP in the presence of single-stranded DNA, the ATP-dependent uptake of single-stranded DNA by duplex DNA, and the ATP-dependent hybridization of homologous single-stranded DNAs. It interacts with LexA causing its activation and leading to its autocatalytic cleavage. This Wolbachia sp. subsp. Brugia malayi (strain TRS) protein is Protein RecA.